The sequence spans 291 residues: uncharacterized protein (291 aa).

The segment at 1–55 is disordered; the sequence is MRTHDIPRSPLVGHKKNAAPDGIGASRACCPARENEPFKKGSTNSRGGGVEWSRS. A run of 2 helical transmembrane segments spans residues 74-96 and 188-210; these read WWAV…PVHA and YYYL…RIRL.

To T.pallidum TP_0733.

Its subcellular location is the cell membrane. This is an uncharacterized protein from Treponema pallidum (strain Nichols).